The following is a 554-amino-acid chain: Hydroxylamine reductase (554 aa).

The [2Fe-2S] cluster site is built by Cys-3, Cys-6, Cys-18, and Cys-25. His-252, Glu-276, Cys-320, Cys-408, Cys-436, Cys-461, Glu-495, and Lys-497 together coordinate hybrid [4Fe-2O-2S] cluster. Position 408 is a cysteine persulfide (Cys-408).

The protein belongs to the HCP family. [2Fe-2S] cluster is required as a cofactor. The cofactor is hybrid [4Fe-2O-2S] cluster.

The protein localises to the cytoplasm. It carries out the reaction A + NH4(+) + H2O = hydroxylamine + AH2 + H(+). Functionally, catalyzes the reduction of hydroxylamine to form NH(3) and H(2)O. This Shewanella loihica (strain ATCC BAA-1088 / PV-4) protein is Hydroxylamine reductase.